Here is a 270-residue protein sequence, read N- to C-terminus: Glucosamine-6-phosphate deaminase (270 aa).

Asp-72 (proton acceptor; for enolization step) is an active-site residue. Asp-141 functions as the For ring-opening step in the catalytic mechanism. His-143 serves as the catalytic Proton acceptor; for ring-opening step. Glu-148 functions as the For ring-opening step in the catalytic mechanism.

Belongs to the glucosamine/galactosamine-6-phosphate isomerase family. NagB subfamily. Homohexamer.

It carries out the reaction alpha-D-glucosamine 6-phosphate + H2O = beta-D-fructose 6-phosphate + NH4(+). It functions in the pathway amino-sugar metabolism; N-acetylneuraminate degradation; D-fructose 6-phosphate from N-acetylneuraminate: step 5/5. With respect to regulation, allosterically activated by N-acetylglucosamine 6-phosphate (GlcNAc6P). Catalyzes the reversible isomerization-deamination of glucosamine 6-phosphate (GlcN6P) to form fructose 6-phosphate (Fru6P) and ammonium ion. The sequence is that of Glucosamine-6-phosphate deaminase from Photorhabdus laumondii subsp. laumondii (strain DSM 15139 / CIP 105565 / TT01) (Photorhabdus luminescens subsp. laumondii).